The following is a 218-amino-acid chain: DNA endonuclease I-ChuI (218 aa).

This sequence belongs to the LAGLIDADG endonuclease family.

It localises to the plastid. It is found in the chloroplast. Its function is as follows. Probable endonuclease involved in intron homing. Encoded in the group-I intron of the subunit rRNA-encoding gene (rrnL), it generates a staggered cut with 4-nt (CTCG) 3'-OH overhangs 2 bp downstream from the intron insertion site. This is DNA endonuclease I-ChuI from Chlamydomonas applanata (Chlamydomonas humicola).